The sequence spans 359 residues: Peptide chain release factor 1 (359 aa).

N5-methylglutamine is present on Gln236.

The protein belongs to the prokaryotic/mitochondrial release factor family. Methylated by PrmC. Methylation increases the termination efficiency of RF1.

Its subcellular location is the cytoplasm. Functionally, peptide chain release factor 1 directs the termination of translation in response to the peptide chain termination codons UAG and UAA. This Lacticaseibacillus casei (strain BL23) (Lactobacillus casei) protein is Peptide chain release factor 1.